Reading from the N-terminus, the 112-residue chain is UPF0482 protein Ent638_1930 (112 aa).

Residues M1 to A27 form the signal peptide.

This sequence belongs to the UPF0482 family.

The chain is UPF0482 protein Ent638_1930 from Enterobacter sp. (strain 638).